Consider the following 380-residue polypeptide: MLGPLRKEHPIFRILNSTFVDLPLPSNLSIWWNFGSLLGLCLITQILTGLFLAMHYTADISLAFSSASHICRDVNYGWLLRNVHANGASLFFICMYCHIGRGLYYGGSNKIETWNVGVILFLVTVLTAFVGYVLVWGRMSFWAATVIANLVTAVPCVGTTIVQWLWGGFSVDNATLTRFFAFHFLFPFIIAALAIIDLVFLHNSGANNPVGLNSNYDKAPFHIYYTTKDTVGFIALIAALFVLALLFPCALNDPENFIPANPLSHPPHIQPEWYFLFAYAILRSIPNKLGGVIALVAAILVLFLMPLLNTSKNESNSFRPLSQATFWILVATFFVLTWIGSQPVEQPFVLIGQIASLLYFSLFIFGFPLVSSLENKMIFS.

A run of 4 helical transmembrane segments spans residues 34–54 (FGSLLGLCLITQILTGLFLAM), 78–99 (WLLRNVHANGASLFFICMYCHI), 114–134 (WNVGVILFLVTVLTAFVGYVL), and 179–199 (FFAFHFLFPFIIAALAIIDLV). Positions 84 and 98 each coordinate heme b. A heme b-binding site is contributed by histidine 183. Histidine 202 provides a ligand contact to a ubiquinone. The next 4 helical transmembrane spans lie at 227–247 (TKDTVGFIALIAALFVLALLF), 289–309 (LGGVIALVAAILVLFLMPLLN), 321–341 (LSQATFWILVATFFVLTWIGS), and 348–369 (FVLIGQIASLLYFSLFIFGFPL).

The protein belongs to the cytochrome b family. The main subunits of complex b-c1 are: cytochrome b, cytochrome c1 and the Rieske protein. Heme b is required as a cofactor.

It is found in the mitochondrion inner membrane. Component of the ubiquinol-cytochrome c reductase complex (complex III or cytochrome b-c1 complex) that is part of the mitochondrial respiratory chain. The b-c1 complex mediates electron transfer from ubiquinol to cytochrome c. Contributes to the generation of a proton gradient across the mitochondrial membrane that is then used for ATP synthesis. In Paracentrotus lividus (Common sea urchin), this protein is Cytochrome b (MT-CYB).